The following is a 519-amino-acid chain: MNVETKHTRTMGDIFVQHSQKLELLKTVLRNVAELDALEGLNMIDAVQRLGIDYNFQREIDEILHKQMSIVSARDDLHEVALRFRLLRQHGYFVPEDVFNNFKDSKGTFKQVLGEDIKGLMSLYEASQLGTEGEDILVEAEKFSGHLLKTSLSHLDHHRVRIVANTLRNPHHKSLAPFMARNFFVTSQATNSWLNLLKEVAKTDFNMVRSLHQNEIVQMSKWWKELGLAKELKFARDQPLKWYIWSMACLTDPKLSEERVELTKPISFVYLIDDIFDVYGTLDDLILFTEAVNRWEITAIDHLPDYMKICFKALYDMTNEFSSKVYLKHGWNPLQSLKISWASLCNAFLVEAKWFASGKLPKSEEYLKNGIVSSGVNVVLVHMFFLLGQNITRKSVELLNETPAIISSSAAILRLWDDLGSAKDENQDGNDGSYVRCYLEEHEGCSIEEAREKTINMISDEWKKLNRELLSPNPFPASFTLASLNLARMIPLMYSYDGNQCLPSLKEYMKLMLYETVSM.

Mg(2+) is bound by residues D273, D277, D417, S421, and E425. Positions 273-277 match the DDXXD motif motif; it reads DDIFD.

The protein belongs to the terpene synthase family. Tpsg subfamily. Mg(2+) is required as a cofactor. It depends on Mn(2+) as a cofactor. In terms of tissue distribution, expressed in receptacle tissue. Not detected in leaves or green fruit.

It localises to the cytoplasm. It is found in the cytosol. It carries out the reaction (2E,6E)-farnesyl diphosphate + H2O = (3S,6E)-nerolidol + diphosphate. It participates in secondary metabolite biosynthesis; terpenoid biosynthesis. In terms of biological role, involved in monoterpene (C10) and sesquiterpene (C15) biosynthesis. Converts geranyl diphosphate (GPP) into S-linalool and farnesyl diphosphate (FPP) into (3S)-E-nerolidol. Exclusively present and highly expressed in the fruit of cultivated (octaploid) varieties. This Fragaria ananassa (Strawberry) protein is (3S,6E)-nerolidol synthase 1.